An 80-amino-acid chain; its full sequence is Exodeoxyribonuclease 7 small subunit (80 aa).

This sequence belongs to the XseB family. Heterooligomer composed of large and small subunits.

Its subcellular location is the cytoplasm. The enzyme catalyses Exonucleolytic cleavage in either 5'- to 3'- or 3'- to 5'-direction to yield nucleoside 5'-phosphates.. Bidirectionally degrades single-stranded DNA into large acid-insoluble oligonucleotides, which are then degraded further into small acid-soluble oligonucleotides. The protein is Exodeoxyribonuclease 7 small subunit of Pseudomonas aeruginosa (strain LESB58).